The sequence spans 168 residues: Transcriptional repressor NrdR (168 aa).

The segment at 1–21 is disordered; that stretch reads MQCPACRHTDSRVLESRSSES. A zinc finger lies at 3–34; that stretch reads CPACRHTDSRVLESRSSESGRSVRRRRECLSC. Residues 7-20 show a composition bias toward basic and acidic residues; that stretch reads RHTDSRVLESRSSE. Residues 49-139 enclose the ATP-cone domain; sequence ISVIKRNGDR…VYRQFRGVRD (91 aa).

This sequence belongs to the NrdR family. The cofactor is Zn(2+).

Its function is as follows. Negatively regulates transcription of bacterial ribonucleotide reductase nrd genes and operons by binding to NrdR-boxes. The polypeptide is Transcriptional repressor NrdR (Synechococcus elongatus (strain ATCC 33912 / PCC 7942 / FACHB-805) (Anacystis nidulans R2)).